A 498-amino-acid polypeptide reads, in one-letter code: MRMNPTTSSSGVATLDKKNLGRIAQIIGPVLDVAFPPGKMPNIYNALVVKGRDTVGQPINVTCEVQQLLGNNRVRAVAMSATDGLTRGMDVIDTGAPLSVPVGGATLGRIFNVLGEPIDNLGPVDNSTTFPIHRSAPAFIQLDTKLSIFETGIKVVDLLAPYRRGGKIGLFGGAGVGKTVLIMELINNIAKAHGGVSVFGGVGERTREGNDLYMEMKESGVINEQNIAESKVALVYGQMNEPPGARMRVGLTALTMAEYFRDVNEQDVLLFVDNIFRFVQAGSEVSALLGRMPSAVGYQPTLSTEMGSLQERITSTKEGSITSIQAVYVPADDLTDPAPATTFAHLDATTVLSRGLAAKGIYPAVDPLDSTSTMLQPRIVGDEHYETAQQVKQTLQRYKELQDIIAILGLDELSEEDRLTVARARKIERFLSQPFFVAEVFTGSPGKYVGLAETIRGFQLILSGELDGLPEQAFYLVGNIDEATAKAMNLEMESNSKK.

172 to 179 (GGAGVGKT) contributes to the ATP binding site.

The protein belongs to the ATPase alpha/beta chains family. F-type ATPases have 2 components, CF(1) - the catalytic core - and CF(0) - the membrane proton channel. CF(1) has five subunits: alpha(3), beta(3), gamma(1), delta(1), epsilon(1). CF(0) has four main subunits: a(1), b(1), b'(1) and c(9-12).

The protein localises to the plastid. The protein resides in the chloroplast thylakoid membrane. It carries out the reaction ATP + H2O + 4 H(+)(in) = ADP + phosphate + 5 H(+)(out). In terms of biological role, produces ATP from ADP in the presence of a proton gradient across the membrane. The catalytic sites are hosted primarily by the beta subunits. The protein is ATP synthase subunit beta, chloroplastic of Helianthus annuus (Common sunflower).